The sequence spans 263 residues: Neurovirulence factor ICP34.5 (263 aa).

The span at 1 to 14 shows a compositional bias: basic residues; sequence MARRRRHRGPRRPR. Positions 1 to 16 are required for nucleolar localization; the sequence is MARRRRHRGPRRPRPP. Disordered regions lie at residues 1–128 and 149–190; these read MARR…PFRL and RRAG…PATP. Over residues 24-35 the composition is skewed to polar residues; that stretch reads TAQSQVTSTPNS. The segment covering 45 to 58 has biased composition (pro residues); that stretch reads AAPPPPPASGPPPS. The segment covering 73–83 has biased composition (acidic residues); the sequence is ASDDDDDDDWP. Pro residues-rich tracts occupy residues 84-93 and 119-128; these read DSPPPEPAPE and SHPPSRPFRL. Residues 128-137 carry the Nuclear export signal motif; it reads LPPRLALRLR. 10 tandem repeats follow at residues 161–163, 164–166, 167–169, 170–172, 173–175, 176–178, 179–181, 182–184, 185–187, and 188–190. Positions 161–190 are 10 X 3 AA tandem repeats of A-T-P; the sequence is ATPATPATPATPATPATPATPATPATPATP. Residues 164 to 190 are compositionally biased toward low complexity; the sequence is ATPATPATPATPATPATPATPATPATP. The segment at 190–203 is interaction with host PPP1CA; it reads PARVRFSPHVRVRH. An important for interferon resistance region spans residues 205 to 263; sequence VVWASAARLARRGSWARERADRARFRRRVAEAEAVIGPCLGPEARARALARGAGPANSV. A Bipartite nuclear localization signal motif is present at residues 215-233; it reads RRGSWARERADRARFRRRV. The interaction with host EIF2S1/EIF-2ALPHA stretch occupies residues 233-248; sequence VAEAEAVIGPCLGPEA.

This sequence belongs to the PPP1R15 family. As to quaternary structure, interacts with host PPP1CA; this interaction to forms a high-molecular-weight complex that dephosphorylates EIF2S1/eIF-2alpha. Interacts with host EIF2S1/eIF-2alpha; this interaction is crucial for the specific dephosphorylation of EIF2S1/eIF-2alpha by PPP1CA. Binds to proliferating cell nuclear antigen (PCNA), which may release host cells from growth arrest and facilitate viral replication. Interacts (via N-terminus) with host C1QBP; this interaction allows C1QBP to be recruited to the inner nuclear membrane by ICP34.5. Interacts with host PRKCA. Interacts with protein UL31. Interacts with host STING/TMEM173; this interaction inhibits the intracellular DNA sensing pathway. Interacts with host BECN1; this interaction modulates host autophagy.

The protein localises to the host cytoplasm. Its subcellular location is the host nucleus. It localises to the host nucleolus. It is found in the virion. In terms of biological role, inhibits the establishment of the immune response and of the integrated stress response (ISR) in the infected cell. Plays essential roles in viral nuclear egress to mediate capsid transit across the nuclear membrane. Facilitates nuclear egress cooperatively with host C1QBP and protein kinase C/PKC to induce lamin A/C phosphorylation and subsequent reorganization. In turn, lamina disassembles and nuclear egress occurs. Recruits the serine/threonine protein phosphatase PPP1CA/PP1-alpha to dephosphorylate the translation initiation factor EIF2S1/eIF-2alpha, thereby couteracting the host shutoff of protein synthesis involving double-stranded RNA-dependent protein kinase EIF2AK2/PKR. In turn, controls host IRF3 activation and subsequently inhibits host interferon response. Controls the DNA sensing pathway by interacting with and inhibiting host STING/TMEM173. Also down-modulates the host MHC class II proteins cell surface expression. Acts as a neurovirulence factor that has a profound effect on the growth of the virus in central nervous system tissue, by interacting with host BECN1 and thereby antagonizing the host autophagy response. In Human herpesvirus 1 (strain F) (HHV-1), this protein is Neurovirulence factor ICP34.5 (RL1).